Reading from the N-terminus, the 329-residue chain is Beta-ketoacyl-[acyl-carrier-protein] synthase III (329 aa).

Active-site residues include cysteine 123 and histidine 256. Positions 257–261 (QANIR) are ACP-binding. Residue asparagine 286 is part of the active site.

The protein belongs to the thiolase-like superfamily. FabH family. In terms of assembly, homodimer.

The protein localises to the cytoplasm. The catalysed reaction is malonyl-[ACP] + acetyl-CoA + H(+) = 3-oxobutanoyl-[ACP] + CO2 + CoA. Its pathway is lipid metabolism; fatty acid biosynthesis. Its function is as follows. Catalyzes the condensation reaction of fatty acid synthesis by the addition to an acyl acceptor of two carbons from malonyl-ACP. Catalyzes the first condensation reaction which initiates fatty acid synthesis and may therefore play a role in governing the total rate of fatty acid production. Possesses both acetoacetyl-ACP synthase and acetyl transacylase activities. Its substrate specificity determines the biosynthesis of branched-chain and/or straight-chain of fatty acids. The sequence is that of Beta-ketoacyl-[acyl-carrier-protein] synthase III from Burkholderia lata (strain ATCC 17760 / DSM 23089 / LMG 22485 / NCIMB 9086 / R18194 / 383).